A 2537-amino-acid polypeptide reads, in one-letter code: Centrosomal protein of 192 kDa (2537 aa).

2 disordered regions span residues Phe-69 to Ser-138 and His-288 to Thr-308. Residues Ser-70–Ser-81 show a composition bias toward low complexity. Residues Val-106 to Gln-122 are compositionally biased toward polar residues. The span at His-288–Glu-298 shows a compositional bias: basic and acidic residues. Residue Ser-812 is modified to Phosphoserine. Disordered stretches follow at residues Val-950–Pro-1021, Val-1043–Ser-1064, Lys-1101–Asn-1158, and Ala-1182–His-1234. Residues Pro-960–Pro-970 are compositionally biased toward polar residues. Residues Phe-984 to Ser-1005 show a composition bias toward low complexity. Polar residues-rich tracts occupy residues Pro-1046 to Thr-1055 and Thr-1103 to Ser-1112. The span at Glu-1128–Ser-1141 shows a compositional bias: basic and acidic residues. Residues Ser-1142–Asn-1158 are compositionally biased toward polar residues. The span at Glu-1195 to Ala-1207 shows a compositional bias: basic and acidic residues. The segment covering Gly-1213 to His-1234 has biased composition (polar residues). 3 positions are modified to phosphoserine: Ser-1755, Ser-2098, and Ser-2110. Pro-2313 is modified (hydroxyproline).

In terms of assembly, interacts with SHBG. Interacts with PLK4; this interaction mediates the formation of a ternary complex composed by PLK4, TENT5C and CEP192. Interacts with CCDC66. In terms of processing, hydroxylation by PHD1/EGLN2 at Pro-2313 promotes ubiquitination. Ubiquitinated by a SCF(SKP2) complex following proline hydroxylation. Post-translationally, ubiquitinated in a FBXL13-dependent manner, leading to proteasomal degradation.

The protein resides in the cytoplasm. Its subcellular location is the cytoskeleton. The protein localises to the microtubule organizing center. It localises to the centrosome. It is found in the centriole. Functionally, required for mitotic centrosome maturation and bipolar spindle assembly. Appears to be a major regulator of pericentriolar material (PCM) recruitment, centrosome maturation, and centriole duplication. Centrosome-specific activating scaffold for AURKA and PLK1. The sequence is that of Centrosomal protein of 192 kDa from Homo sapiens (Human).